The following is a 1394-amino-acid chain: DNA-directed RNA polymerase subunit beta' (1394 aa).

Residues Cys-70, Cys-72, Cys-85, and Cys-88 each coordinate Zn(2+). 3 residues coordinate Mg(2+): Asp-470, Asp-472, and Asp-474. Zn(2+) contacts are provided by Cys-815, Cys-889, Cys-896, and Cys-899.

This sequence belongs to the RNA polymerase beta' chain family. The RNAP catalytic core consists of 2 alpha, 1 beta, 1 beta' and 1 omega subunit. When a sigma factor is associated with the core the holoenzyme is formed, which can initiate transcription. Requires Mg(2+) as cofactor. The cofactor is Zn(2+).

The catalysed reaction is RNA(n) + a ribonucleoside 5'-triphosphate = RNA(n+1) + diphosphate. Its function is as follows. DNA-dependent RNA polymerase catalyzes the transcription of DNA into RNA using the four ribonucleoside triphosphates as substrates. The polypeptide is DNA-directed RNA polymerase subunit beta' (Anaeromyxobacter sp. (strain K)).